We begin with the raw amino-acid sequence, 526 residues long: Bifunctional purine biosynthesis protein PurH (526 aa).

One can recognise an MGS-like domain in the interval 1–147 (MPSIKRALIS…KNWKHVAIVT (147 aa)).

This sequence belongs to the PurH family.

The catalysed reaction is (6R)-10-formyltetrahydrofolate + 5-amino-1-(5-phospho-beta-D-ribosyl)imidazole-4-carboxamide = 5-formamido-1-(5-phospho-D-ribosyl)imidazole-4-carboxamide + (6S)-5,6,7,8-tetrahydrofolate. The enzyme catalyses IMP + H2O = 5-formamido-1-(5-phospho-D-ribosyl)imidazole-4-carboxamide. It participates in purine metabolism; IMP biosynthesis via de novo pathway; 5-formamido-1-(5-phospho-D-ribosyl)imidazole-4-carboxamide from 5-amino-1-(5-phospho-D-ribosyl)imidazole-4-carboxamide (10-formyl THF route): step 1/1. It functions in the pathway purine metabolism; IMP biosynthesis via de novo pathway; IMP from 5-formamido-1-(5-phospho-D-ribosyl)imidazole-4-carboxamide: step 1/1. The protein is Bifunctional purine biosynthesis protein PurH of Neisseria meningitidis serogroup C / serotype 2a (strain ATCC 700532 / DSM 15464 / FAM18).